Consider the following 178-residue polypeptide: Nicotinamide-nucleotide adenylyltransferase (178 aa).

The protein belongs to the archaeal NMN adenylyltransferase family.

The protein resides in the cytoplasm. The enzyme catalyses beta-nicotinamide D-ribonucleotide + ATP + H(+) = diphosphate + NAD(+). It participates in cofactor biosynthesis; NAD(+) biosynthesis; NAD(+) from nicotinamide D-ribonucleotide: step 1/1. This Caldivirga maquilingensis (strain ATCC 700844 / DSM 13496 / JCM 10307 / IC-167) protein is Nicotinamide-nucleotide adenylyltransferase.